Reading from the N-terminus, the 306-residue chain is Pantothenate kinase (306 aa).

90 to 97 (GSVAVGKS) is an ATP binding site.

This sequence belongs to the prokaryotic pantothenate kinase family.

It is found in the cytoplasm. It catalyses the reaction (R)-pantothenate + ATP = (R)-4'-phosphopantothenate + ADP + H(+). It participates in cofactor biosynthesis; coenzyme A biosynthesis; CoA from (R)-pantothenate: step 1/5. This is Pantothenate kinase from Listeria welshimeri serovar 6b (strain ATCC 35897 / DSM 20650 / CCUG 15529 / CIP 8149 / NCTC 11857 / SLCC 5334 / V8).